A 435-amino-acid polypeptide reads, in one-letter code: Asparagine--tRNA ligase (435 aa).

This sequence belongs to the class-II aminoacyl-tRNA synthetase family. As to quaternary structure, homodimer.

The protein localises to the cytoplasm. The enzyme catalyses tRNA(Asn) + L-asparagine + ATP = L-asparaginyl-tRNA(Asn) + AMP + diphosphate + H(+). The polypeptide is Asparagine--tRNA ligase (Leptospira interrogans serogroup Icterohaemorrhagiae serovar Lai (strain 56601)).